The sequence spans 174 residues: UPF0340 protein SH0921 (174 aa).

This sequence belongs to the UPF0340 family.

The polypeptide is UPF0340 protein SH0921 (Staphylococcus haemolyticus (strain JCSC1435)).